The primary structure comprises 268 residues: Putative hydro-lyase ABAYE2440 (268 aa).

It belongs to the D-glutamate cyclase family.

This Acinetobacter baumannii (strain AYE) protein is Putative hydro-lyase ABAYE2440.